The primary structure comprises 287 residues: Elongation factor Ts (287 aa).

The tract at residues Thr80–Leu83 is involved in Mg(2+) ion dislocation from EF-Tu.

It belongs to the EF-Ts family.

It is found in the cytoplasm. In terms of biological role, associates with the EF-Tu.GDP complex and induces the exchange of GDP to GTP. It remains bound to the aminoacyl-tRNA.EF-Tu.GTP complex up to the GTP hydrolysis stage on the ribosome. This Pseudomonas putida (strain GB-1) protein is Elongation factor Ts.